The chain runs to 285 residues: NADPH-dependent 7-cyano-7-deazaguanine reductase (285 aa).

Residue 80-82 (VES) participates in substrate binding. NADPH is bound at residue 82–83 (SK). The Thioimide intermediate role is filled by Cys191. Asp198 (proton donor) is an active-site residue. 231-232 (HE) provides a ligand contact to substrate. Residue 260 to 261 (RG) participates in NADPH binding.

The protein belongs to the GTP cyclohydrolase I family. QueF type 2 subfamily. In terms of assembly, homodimer.

The protein localises to the cytoplasm. It carries out the reaction 7-aminomethyl-7-carbaguanine + 2 NADP(+) = 7-cyano-7-deazaguanine + 2 NADPH + 3 H(+). The protein operates within tRNA modification; tRNA-queuosine biosynthesis. Catalyzes the NADPH-dependent reduction of 7-cyano-7-deazaguanine (preQ0) to 7-aminomethyl-7-deazaguanine (preQ1). The sequence is that of NADPH-dependent 7-cyano-7-deazaguanine reductase from Psychrobacter arcticus (strain DSM 17307 / VKM B-2377 / 273-4).